The following is an 88-amino-acid chain: Small ribosomal subunit protein bS16 (88 aa).

The protein belongs to the bacterial ribosomal protein bS16 family.

This is Small ribosomal subunit protein bS16 from Mycoplasmopsis pulmonis (strain UAB CTIP) (Mycoplasma pulmonis).